Here is a 501-residue protein sequence, read N- to C-terminus: Cytokinin dehydrogenase 2 (501 aa).

An N-terminal signal peptide occupies residues 1 to 22 (MANLRLMITLITVLMITKSSNG). Asn-32 and Asn-51 each carry an N-linked (GlcNAc...) asparagine glycan. The FAD-binding PCMH-type domain maps to 53–226 (TTVTPGGVIC…TRARIVLDHA (174 aa)). Ala-87, Gly-89, and Gly-91 together coordinate FAD. At His-92 the chain carries Pros-8alpha-FAD histidine. The FAD site is built by Ser-93 and Gln-97. Asn-107 is a glycosylation site (N-linked (GlcNAc...) asparagine). Residues Asp-150, Thr-155, Ser-161, Ile-165, Ile-216, Tyr-460, Ser-495, and Gln-498 each contribute to the FAD site.

This sequence belongs to the oxygen-dependent FAD-linked oxidoreductase family. FAD is required as a cofactor. As to expression, expressed in the shoot apex, in stipules, and occasionally in the most apical part of the inflorescence stems. Not detected in roots.

Its subcellular location is the endoplasmic reticulum. The protein resides in the secreted. The protein localises to the extracellular space. The catalysed reaction is N(6)-dimethylallyladenine + A + H2O = 3-methyl-2-butenal + adenine + AH2. Functionally, catalyzes the oxidation of cytokinins, a family of N(6)-substituted adenine derivatives that are plant hormones, where the substituent is an isopentenyl group. Modulates asymmetric cytokinin signaling in emerged lateral roots. Its activity determines cell elongation and number in emerged lateral roots and defines angular growth of lateral roots. This is Cytokinin dehydrogenase 2 (CKX2) from Arabidopsis thaliana (Mouse-ear cress).